A 546-amino-acid polypeptide reads, in one-letter code: Glucose-6-phosphate isomerase (546 aa).

Catalysis depends on glutamate 357, which acts as the Proton donor. Catalysis depends on residues histidine 389 and lysine 509.

It belongs to the GPI family.

It is found in the cytoplasm. It carries out the reaction alpha-D-glucose 6-phosphate = beta-D-fructose 6-phosphate. The protein operates within carbohydrate biosynthesis; gluconeogenesis. Its pathway is carbohydrate degradation; glycolysis; D-glyceraldehyde 3-phosphate and glycerone phosphate from D-glucose: step 2/4. Catalyzes the reversible isomerization of glucose-6-phosphate to fructose-6-phosphate. This Anaeromyxobacter dehalogenans (strain 2CP-1 / ATCC BAA-258) protein is Glucose-6-phosphate isomerase.